Here is a 463-residue protein sequence, read N- to C-terminus: NADH dehydrogenase [ubiquinone] iron-sulfur protein 2, mitochondrial (463 aa).

Residues 1 to 33 (MAALRVLCGLRGVAAQVLRPGAGVRLPIQPSRG) constitute a mitochondrion transit peptide. Lysine 62 is subject to N6-acetyllysine. A Symmetric dimethylarginine modification is found at arginine 118. Residues cysteine 326, cysteine 332, and cysteine 347 each contribute to the [4Fe-4S] cluster site.

This sequence belongs to the complex I 49 kDa subunit family. As to quaternary structure, core subunit of respiratory chain NADH dehydrogenase (Complex I) which is composed of 45 different subunits. Component of the iron-sulfur (IP) fragment of the enzyme. Interacts with NDUFAF3. Interacts with NDUFAF7. Interacts with CERS2. It depends on [4Fe-4S] cluster as a cofactor. In terms of processing, dimethylation at Arg-118 by NDUFAF7 takes place after NDUFS2 assembles into the complex I, leading to stabilize the early intermediate complex.

The protein localises to the mitochondrion inner membrane. The enzyme catalyses a ubiquinone + NADH + 5 H(+)(in) = a ubiquinol + NAD(+) + 4 H(+)(out). Its function is as follows. Core subunit of the mitochondrial membrane respiratory chain NADH dehydrogenase (Complex I) which catalyzes electron transfer from NADH through the respiratory chain, using ubiquinone as an electron acceptor. Essential for the catalytic activity and assembly of complex I. Redox-sensitive, critical component of the oxygen-sensing pathway in the pulmonary vasculature which plays a key role in acute pulmonary oxygen-sensing and hypoxic pulmonary vasoconstriction. Plays an important role in carotid body sensing of hypoxia. Essential for glia-like neural stem and progenitor cell proliferation, differentiation and subsequent oligodendrocyte or neuronal maturation. This chain is NADH dehydrogenase [ubiquinone] iron-sulfur protein 2, mitochondrial (NDUFS2), found in Gorilla gorilla gorilla (Western lowland gorilla).